The following is a 99-amino-acid chain: Ubiquitin-related modifier 1 homolog (99 aa).

1-thioglycine is present on Gly99. A Glycyl lysine isopeptide (Gly-Lys) (interchain with K-? in acceptor proteins) cross-link involves residue Gly99.

The protein belongs to the URM1 family. In terms of processing, C-terminal thiocarboxylation occurs in 2 steps, it is first acyl-adenylated (-COAMP) via the hesA/moeB/thiF part of the MOCS3 homolog, then thiocarboxylated (-COSH) via the rhodanese domain of the MOCS3 homolog.

It is found in the cytoplasm. It functions in the pathway tRNA modification; 5-methoxycarbonylmethyl-2-thiouridine-tRNA biosynthesis. Functionally, acts as a sulfur carrier required for 2-thiolation of mcm(5)S(2)U at tRNA wobble positions of cytosolic tRNA(Lys), tRNA(Glu) and tRNA(Gln). Serves as sulfur donor in tRNA 2-thiolation reaction by being thiocarboxylated (-COSH) at its C-terminus by MOCS3. The sulfur is then transferred to tRNA to form 2-thiolation of mcm(5)S(2)U. Also acts as a ubiquitin-like protein (UBL) that is covalently conjugated via an isopeptide bond to lysine residues of target proteins. The thiocarboxylated form serves as substrate for conjugation and oxidative stress specifically induces the formation of UBL-protein conjugates. The polypeptide is Ubiquitin-related modifier 1 homolog (Chlamydomonas reinhardtii (Chlamydomonas smithii)).